A 285-amino-acid polypeptide reads, in one-letter code: Probable endonuclease 4 (285 aa).

Residues histidine 69, histidine 109, glutamate 145, aspartate 179, histidine 182, histidine 216, aspartate 229, histidine 231, and glutamate 261 each contribute to the Zn(2+) site.

Belongs to the AP endonuclease 2 family. Zn(2+) serves as cofactor.

It carries out the reaction Endonucleolytic cleavage to 5'-phosphooligonucleotide end-products.. In terms of biological role, endonuclease IV plays a role in DNA repair. It cleaves phosphodiester bonds at apurinic or apyrimidinic (AP) sites, generating a 3'-hydroxyl group and a 5'-terminal sugar phosphate. The sequence is that of Probable endonuclease 4 from Salmonella typhimurium (strain LT2 / SGSC1412 / ATCC 700720).